Consider the following 1114-residue polypeptide: Zinc finger E-box-binding homeobox 1 (1114 aa).

2 disordered regions span residues 1–105 and 142–163; these read MADG…EVGC and APEE…NGTP. Low complexity predominate over residues 15-30; sequence PRRNNVTNYNNVIEAN. The segment covering 149 to 160 has biased composition (polar residues); the sequence is QGTPEASGQDEN. 3 consecutive C2H2-type zinc fingers follow at residues 170–193, 200–222, and 240–262; these read LTCP…KYRH, FSCS…MTSH, and FKCT…LRIH. The segment at 268–292 adopts a C2H2-type 4; atypical zinc-finger fold; sequence YECPNCKKRFSHSGSYSSHISSKKC. Disordered stretches follow at residues 304-326, 491-529, 553-588, and 636-716; these read SGLK…PARP, NLKK…TNDS, KNPP…GQPP, and QISV…SRNS. Residues 309-326 are compositionally biased toward low complexity; that stretch reads SQCSSPSLSASPGSPARP. The segment covering 504–523 has biased composition (basic and acidic residues); the sequence is KNEKLPEDLTVKSEKDKNFE. Polar residues-rich tracts occupy residues 573 to 584 and 636 to 681; these read APSETGENNLSP and QISV…QNPA. A DNA-binding region (homeobox; atypical) is located at residues 581-640; sequence NLSPGQPPLKNLLSLLKAYYALNAQPSAEELSKIADSVNLPLDVVKKWFEKMQAGQISVQ. Positions 682–716 are enriched in low complexity; it reads NTSKSQTSSGGSTQNGSRSSTPSPSPLNLSSSRNS. Positions 767 to 771 match the CTBP-binding motif motif; sequence PLNLT. 2 stretches are compositionally biased toward polar residues: residues 852-866 and 874-890; these read AVQE…ANGS and SSEG…SDST. Residues 852-898 form a disordered region; it reads AVQETPPKQTQANGSQDERQDTSSEGVSNVEDQNDSDSTPPKKKMRK. C2H2-type zinc fingers lie at residues 904–926 and 932–954; these read YACD…KYEH and HECG…MRLH. A C2H2-type 7; atypical zinc finger spans residues 960–981; the sequence is YQCDKCGKRFSHSGSYSQHMNH. The interval 989–1114 is disordered; that stretch reads EAEERDSTEQ…QVSEEKTNKA (126 aa). Acidic residues predominate over residues 1031-1047; that stretch reads EEEEDSEKEEEEEEEKD. Residues 1048–1062 are compositionally biased toward basic and acidic residues; sequence VEGLQEEKECRKLQD. A compositionally biased stretch (acidic residues) spans 1063-1078; it reads VEEEEEVEEEEEEEEG. The segment covering 1079-1089 has biased composition (basic and acidic residues); sequence KTEGNKNDDVV.

The protein belongs to the delta-EF1/ZFH-1 C2H2-type zinc-finger family. Expression is developmentally regulated with high expression in mesoderm, nervous system and lens.

It localises to the nucleus. Functionally, acts as a transcriptional repressor. Positively regulates neuronal differentiation. Represses transcription by binding to the E box-containing promoter. Binds to delta 1-crystallin enhancer core and represses lens-specific transcription. It also binds many other non-lens specific DNA sequences. The polypeptide is Zinc finger E-box-binding homeobox 1 (ZEB1) (Gallus gallus (Chicken)).